The chain runs to 352 residues: S-adenosylmethionine:tRNA ribosyltransferase-isomerase (352 aa).

Belongs to the QueA family. In terms of assembly, monomer.

The protein localises to the cytoplasm. The enzyme catalyses 7-aminomethyl-7-carbaguanosine(34) in tRNA + S-adenosyl-L-methionine = epoxyqueuosine(34) in tRNA + adenine + L-methionine + 2 H(+). It participates in tRNA modification; tRNA-queuosine biosynthesis. In terms of biological role, transfers and isomerizes the ribose moiety from AdoMet to the 7-aminomethyl group of 7-deazaguanine (preQ1-tRNA) to give epoxyqueuosine (oQ-tRNA). In Syntrophomonas wolfei subsp. wolfei (strain DSM 2245B / Goettingen), this protein is S-adenosylmethionine:tRNA ribosyltransferase-isomerase.